Here is a 537-residue protein sequence, read N- to C-terminus: Putative cysteine ligase BshC (537 aa).

The stretch at 422–450 (IEKVEGMIEQQRRLYQDLLDEVAGNQNNI) forms a coiled coil.

The protein belongs to the BshC family.

In terms of biological role, involved in bacillithiol (BSH) biosynthesis. May catalyze the last step of the pathway, the addition of cysteine to glucosamine malate (GlcN-Mal) to generate BSH. In Staphylococcus aureus (strain MRSA252), this protein is Putative cysteine ligase BshC.